The primary structure comprises 528 residues: Cytochrome P450 monooxygenase polB (528 aa).

Residues 3-23 (SFFLVCPVAFLGFTICYLVYV) form a helical membrane-spanning segment. Cys473 contacts heme.

It belongs to the cytochrome P450 family. Requires heme as cofactor.

It localises to the membrane. The catalysed reaction is 4beta-carboxyl motiol + reduced [NADPH--hemoprotein reductase] + O2 = 2alpha-hydroxyl, 4beta-carboxyl motiol + oxidized [NADPH--hemoprotein reductase] + H2O + H(+). It carries out the reaction 2-deoxypolytolypin + reduced [NADPH--hemoprotein reductase] + O2 = polytolypin + oxidized [NADPH--hemoprotein reductase] + H2O + H(+). It functions in the pathway secondary metabolite biosynthesis; terpenoid biosynthesis. Cytochrome P450 monooxygenase; part of the gene cluster that mediates the biosynthesis of antifungal fernane-type triterpenoid polytolypin. PolB acts as a hydroxylase and installs the 2-alpha-hydroxyl group in polytolypin. Within the pathway, the triterpene cyclase polA first catalyzes the cyclization of 2,3-oxidosqualene to motiol, polC converts the 4-alpha-methyl group of motiol to a carboxyl group, polB is responsible for appending a hydroxyl group at the 2-alpha position and polE is a dual functional P450, which can catalyze the formation of both the 1-beta-hydroxyl group and 10-beta-carboxyl group. The chain is Cytochrome P450 monooxygenase polB from Polytolypa hystricis (strain UAMH7299).